The chain runs to 91 residues: MSVKIRLKRMGSKKRPFYRIVVADSRSPRDGRFIETVGTYNPLTDPETVTLKEEKVMNWLNNGAQPSDTVRNILSRNGVMKKFHEAKFSKK.

It belongs to the bacterial ribosomal protein bS16 family.

This is Small ribosomal subunit protein bS16 from Ligilactobacillus salivarius (strain UCC118) (Lactobacillus salivarius).